A 228-amino-acid chain; its full sequence is Thrombin-like enzyme gyroxin analog (228 aa).

The 222-residue stretch at 1-222 (VIGGDECNIN…YLDWIQSVIA (222 aa)) folds into the Peptidase S1 domain. Disulfide bonds link C7-C138, C28-C44, C78-C227, C117-C183, C149-C162, and C173-C198. H43 acts as the Charge relay system in catalysis. Residues N45 and N81 are each glycosylated (N-linked (GlcNAc...) asparagine). Catalysis depends on D88, which acts as the Charge relay system. N145 is a glycosylation site (N-linked (GlcNAc...) asparagine). The active-site Charge relay system is S177. N224 carries an N-linked (GlcNAc...) asparagine glycan.

The protein belongs to the peptidase S1 family. Snake venom subfamily. As to quaternary structure, monomer. In terms of tissue distribution, expressed by the venom gland.

Its subcellular location is the secreted. It carries out the reaction Selective cleavage of Arg-|-Xaa bond in fibrinogen, to form fibrin, and release fibrinopeptide A. The specificity of further degradation of fibrinogen varies with species origin of the enzyme.. Its activity is regulated as follows. Inhibited competitively by amidines and guanidines, and irreversibly inhibited by diisopropylfluorophosphate. Thrombin-like snake venom serine protease, that cleaves alpha-chain of fibrinogen (FGA) releases only fibrinopeptide A. Shows coagulant, esterase and amidase activities. Induces the barrel rotation syndrome in mice, which is manifested by gyroxin-like, rapid rolling motions. May also reversibly increase the permeability of the blood brain barrier (BBB) in mice. The sequence is that of Thrombin-like enzyme gyroxin analog from Lachesis muta muta (Bushmaster).